Consider the following 539-residue polypeptide: CTP synthase (539 aa).

An amidoligase domain region spans residues 1–268 (MSFKSIFLTG…SDFLLNKLGF (268 aa)). S14 is a binding site for CTP. S14 is a UTP binding site. 15-20 (SLGKGL) contributes to the ATP binding site. Y55 serves as a coordination point for L-glutamine. D72 provides a ligand contact to ATP. Positions 72 and 142 each coordinate Mg(2+). Residues 149–151 (DIE), 188–193 (KTKPTQ), and K224 each bind CTP. Residues 188 to 193 (KTKPTQ) and K224 contribute to the UTP site. The region spanning 294 to 532 (RIGLVGKYLE…IRAAKAYSLE (239 aa)) is the Glutamine amidotransferase type-1 domain. G353 contacts L-glutamine. C380 serves as the catalytic Nucleophile; for glutamine hydrolysis. L-glutamine contacts are provided by residues 381–384 (LGMQ), E404, and R460. Catalysis depends on residues H505 and E507.

It belongs to the CTP synthase family. As to quaternary structure, homotetramer.

It catalyses the reaction UTP + L-glutamine + ATP + H2O = CTP + L-glutamate + ADP + phosphate + 2 H(+). The enzyme catalyses L-glutamine + H2O = L-glutamate + NH4(+). The catalysed reaction is UTP + NH4(+) + ATP = CTP + ADP + phosphate + 2 H(+). It participates in pyrimidine metabolism; CTP biosynthesis via de novo pathway; CTP from UDP: step 2/2. With respect to regulation, allosterically activated by GTP, when glutamine is the substrate; GTP has no effect on the reaction when ammonia is the substrate. The allosteric effector GTP functions by stabilizing the protein conformation that binds the tetrahedral intermediate(s) formed during glutamine hydrolysis. Inhibited by the product CTP, via allosteric rather than competitive inhibition. Its function is as follows. Catalyzes the ATP-dependent amination of UTP to CTP with either L-glutamine or ammonia as the source of nitrogen. Regulates intracellular CTP levels through interactions with the four ribonucleotide triphosphates. The chain is CTP synthase from Chlamydia trachomatis serovar A (strain ATCC VR-571B / DSM 19440 / HAR-13).